The chain runs to 728 residues: Ribosome biogenesis protein bop1-A (728 aa).

A disordered region spans residues 1 to 114 (MKRGSQGEAG…ENDSSDEEDI (114 aa)). Residues 55–67 (SDDEEDHWSEEEE) are compositionally biased toward acidic residues. Residues 68 to 77 (NPGKSPKEII) are compositionally biased toward basic and acidic residues. 7 WD repeats span residues 393-432 (GHKDLVRCISVSPSGQWLVSGSDDCSVRFWEVSTGRCMKS), 434-474 (VLEG…RLLC), 514-556 (KHQK…SQNP), 559-597 (KNKGQVQKVLFHPTRPFFFVATQRYVRVYNLLKQELTKK), 600-639 (TNCKWVSSIAVHPAGDNLICGSYDSKLAWFDMDLSTKPYK), 643-682 (HHKKALRAVSFHKSYPLFASGSDDGSVIVCHGMVYNDLLQ), and 698-728 (HRDLGVLDVTFHPTQPWVFSSGADATIRLFT).

The protein belongs to the WD repeat BOP1/ERB1 family. Component of the PeBoW complex, composed of bop1, pes1 and wdr12. The complex is held together by bop1, which interacts with pes1 via its N-terminal domain and with wdr12 via a high-affinity interaction between the seven-bladed beta-propeller domains of the 2 proteins. The PeBoW complex associates with the 66S pre-ribosome.

The protein localises to the nucleus. The protein resides in the nucleolus. It is found in the nucleoplasm. Component of the PeBoW complex, which is required for maturation of 28S and 5.8S ribosomal RNAs and formation of the 60S ribosome. This chain is Ribosome biogenesis protein bop1-A (bop1-a), found in Xenopus laevis (African clawed frog).